A 101-amino-acid polypeptide reads, in one-letter code: Large ribosomal subunit protein uL23 (101 aa).

Belongs to the universal ribosomal protein uL23 family. As to quaternary structure, part of the 50S ribosomal subunit. Contacts protein L29, and trigger factor when it is bound to the ribosome.

Functionally, one of the early assembly proteins it binds 23S rRNA. One of the proteins that surrounds the polypeptide exit tunnel on the outside of the ribosome. Forms the main docking site for trigger factor binding to the ribosome. The protein is Large ribosomal subunit protein uL23 of Lactobacillus helveticus (strain DPC 4571).